The sequence spans 859 residues: Protein FAM171A1 (859 aa).

A signal peptide spans 1 to 20; that stretch reads MSGSTAVALLFCVLSCSVWG. The Extracellular segment spans residues 21–307; sequence AGSKASHEHN…VTQDITSYHT (287 aa). N-linked (GlcNAc...) asparagine glycosylation is found at Asn-163, Asn-194, and Asn-198. A helical transmembrane segment spans residues 308–328; the sequence is IFLLAILGGIAFILLVLLCIL. The Cytoplasmic portion of the chain corresponds to 329–859; that stretch reads LYYCRRKCLK…ERPLLAFNKK (531 aa). 3 disordered regions span residues 397 to 421, 484 to 509, and 771 to 859; these read SRDFGSREELLSHQEEKSRMSLDNL, TNHVTAGSKPNIQEQMHPVPSAPEPE, and QSPS…FNKK. A compositionally biased stretch (basic and acidic residues) spans 400–416; sequence FGSREELLSHQEEKSRM. 2 stretches are compositionally biased toward polar residues: residues 484–497 and 797–806; these read TNHVTAGSKPNIQE and SGSQTPSLQE. The span at 838 to 852 shows a compositional bias: basic and acidic residues; that stretch reads GENKKSPWQKREERP.

This sequence belongs to the FAM171 family.

The protein resides in the cell membrane. In terms of biological role, may be involved in the regulation of the cytoskeletal dynamics, plays a role in actin stress fiber formation. The polypeptide is Protein FAM171A1 (fam171a1) (Xenopus laevis (African clawed frog)).